The sequence spans 343 residues: Anthranilate phosphoribosyltransferase (343 aa).

Residues Gly-81, 84–85 (GD), 91–94 (NLST), 109–117 (KHGNRSVSS), and Ser-121 each bind 5-phospho-alpha-D-ribose 1-diphosphate. Gly-81 provides a ligand contact to anthranilate. Ser-93 serves as a coordination point for Mg(2+). Residue Asn-112 coordinates anthranilate. Arg-167 contributes to the anthranilate binding site. Mg(2+) contacts are provided by Asp-226 and Glu-227.

The protein belongs to the anthranilate phosphoribosyltransferase family. As to quaternary structure, homodimer. Mg(2+) is required as a cofactor.

It catalyses the reaction N-(5-phospho-beta-D-ribosyl)anthranilate + diphosphate = 5-phospho-alpha-D-ribose 1-diphosphate + anthranilate. It functions in the pathway amino-acid biosynthesis; L-tryptophan biosynthesis; L-tryptophan from chorismate: step 2/5. Its function is as follows. Catalyzes the transfer of the phosphoribosyl group of 5-phosphorylribose-1-pyrophosphate (PRPP) to anthranilate to yield N-(5'-phosphoribosyl)-anthranilate (PRA). This Cellvibrio japonicus (strain Ueda107) (Pseudomonas fluorescens subsp. cellulosa) protein is Anthranilate phosphoribosyltransferase.